The primary structure comprises 399 residues: Acetate kinase (399 aa).

Residue Asn-7 participates in Mg(2+) binding. Position 14 (Lys-14) interacts with ATP. Arg-89 is a substrate binding site. Asp-146 functions as the Proton donor/acceptor in the catalytic mechanism. Residues 206 to 210, 280 to 282, and 328 to 332 each bind ATP; these read HLGNG, DMR, and GIGEN. Glu-382 is a binding site for Mg(2+).

Belongs to the acetokinase family. In terms of assembly, homodimer. It depends on Mg(2+) as a cofactor. Requires Mn(2+) as cofactor.

The protein resides in the cytoplasm. It catalyses the reaction acetate + ATP = acetyl phosphate + ADP. The protein operates within metabolic intermediate biosynthesis; acetyl-CoA biosynthesis; acetyl-CoA from acetate: step 1/2. Catalyzes the formation of acetyl phosphate from acetate and ATP. Can also catalyze the reverse reaction. This chain is Acetate kinase, found in Campylobacter fetus subsp. fetus (strain 82-40).